The primary structure comprises 403 residues: F-box/kelch-repeat protein At5g43190 (403 aa).

Residues 45-91 (PNIWSNLPNHLLEHILSLLPFKTLLTLRSISRHLRSLILSPSFISDH) form the F-box domain. Kelch repeat units follow at residues 91–140 (HSFS…LLSS), 192–240 (KIFT…VFYN), 291–339 (ILYM…VCYH), and 343–393 (HVYC…FRWF).

The chain is F-box/kelch-repeat protein At5g43190 from Arabidopsis thaliana (Mouse-ear cress).